Reading from the N-terminus, the 374-residue chain is Nucleosome assembly protein 1;3 (374 aa).

Residues Val-26–Glu-80 adopt a coiled-coil conformation. Ser-41 carries the phosphoserine modification. Residues Leu-47–Gln-62 carry the Nuclear export signal motif. The short motif at Lys-222–Lys-227 is the Nuclear localization signal element. Over residues Ile-299–Glu-339 the composition is skewed to acidic residues. Residues Ile-299–Gln-374 form a disordered region. A compositionally biased stretch (basic residues) spans Thr-343 to Gly-355. A compositionally biased stretch (basic and acidic residues) spans Gln-364–Gln-374. Cys-371 carries the post-translational modification Cysteine methyl ester. Residue Cys-371 is the site of S-farnesyl cysteine attachment. Positions Lys-372–Gln-374 are cleaved as a propeptide — removed in mature form.

This sequence belongs to the nucleosome assembly protein (NAP) family. Can form homomeric and heteromeric protein complexes with NAP1;1, NAP1;2 and NAP1;4. Binds histone H2A and associates with chromatin in vivo. As to expression, ubiquitous.

The protein localises to the nucleus. It localises to the cytoplasm. Functionally, may modulate chromatin structure by regulation of nucleosome assembly/disassembly. May function in nucleotide excision repair (NER). Involved in somatic homologous recombination. Could be involved in response to abscisic acid (ABA) and to salt stress. In Arabidopsis thaliana (Mouse-ear cress), this protein is Nucleosome assembly protein 1;3 (NAP1;3).